We begin with the raw amino-acid sequence, 154 residues long: UPF0039 protein sll0451 (154 aa).

The N-acetyltransferase domain occupies 8–151 (QRFNDISGEA…EHISMIFRVP (144 aa)).

The protein belongs to the UPF0039 (ElaA) family.

The sequence is that of UPF0039 protein sll0451 from Synechocystis sp. (strain ATCC 27184 / PCC 6803 / Kazusa).